We begin with the raw amino-acid sequence, 270 residues long: Putative serine acetyltransferase (270 aa).

This sequence belongs to the transferase hexapeptide repeat family.

Its subcellular location is the cytoplasm. The protein resides in the nucleus. It catalyses the reaction L-serine + acetyl-CoA = O-acetyl-L-serine + CoA. The protein operates within amino-acid biosynthesis; L-cysteine biosynthesis; L-cysteine from L-serine: step 1/2. This is Putative serine acetyltransferase from Schizosaccharomyces pombe (strain 972 / ATCC 24843) (Fission yeast).